A 324-amino-acid polypeptide reads, in one-letter code: 2,3,4,5-tetrahydropyridine-2,6-dicarboxylate N-succinyltransferase (324 aa).

The Mg(2+) site is built by Asp-173 and Glu-190. The active-site Acyl-anhydride intermediate is the Glu-206. Residues Arg-208, Gly-223, Ser-226, Ala-249, 264 to 265 (EA), Gly-272, Lys-284, and 297 to 300 (RRNS) contribute to the succinyl-CoA site.

This sequence belongs to the type 2 tetrahydrodipicolinate N-succinyltransferase family. In terms of assembly, homotrimer.

The protein localises to the cytoplasm. The catalysed reaction is (S)-2,3,4,5-tetrahydrodipicolinate + succinyl-CoA + H2O = (S)-2-succinylamino-6-oxoheptanedioate + CoA. It participates in amino-acid biosynthesis; L-lysine biosynthesis via DAP pathway; LL-2,6-diaminopimelate from (S)-tetrahydrodipicolinate (succinylase route): step 1/3. Catalyzes the conversion of the cyclic tetrahydrodipicolinate (THDP) into the acyclic N-succinyl-L-2-amino-6-oxopimelate using succinyl-CoA. The sequence is that of 2,3,4,5-tetrahydropyridine-2,6-dicarboxylate N-succinyltransferase from Geodermatophilus obscurus (strain ATCC 25078 / DSM 43160 / JCM 3152 / CCUG 61914 / KCC A-0152 / KCTC 9177 / NBRC 13315 / NRRL B-3577 / G-20).